The chain runs to 309 residues: Aspartate carbamoyltransferase catalytic subunit (309 aa).

Carbamoyl phosphate is bound by residues Arg-56 and Thr-57. Lys-84 is an L-aspartate binding site. Carbamoyl phosphate-binding residues include Arg-106, His-136, and Gln-139. The L-aspartate site is built by Arg-169 and Arg-221. The carbamoyl phosphate site is built by Ala-264 and Pro-265.

This sequence belongs to the aspartate/ornithine carbamoyltransferase superfamily. ATCase family. Heterododecamer (2C3:3R2) of six catalytic PyrB chains organized as two trimers (C3), and six regulatory PyrI chains organized as three dimers (R2).

It catalyses the reaction carbamoyl phosphate + L-aspartate = N-carbamoyl-L-aspartate + phosphate + H(+). The protein operates within pyrimidine metabolism; UMP biosynthesis via de novo pathway; (S)-dihydroorotate from bicarbonate: step 2/3. Catalyzes the condensation of carbamoyl phosphate and aspartate to form carbamoyl aspartate and inorganic phosphate, the committed step in the de novo pyrimidine nucleotide biosynthesis pathway. In Limosilactobacillus reuteri subsp. reuteri (strain JCM 1112) (Lactobacillus reuteri), this protein is Aspartate carbamoyltransferase catalytic subunit.